The sequence spans 806 residues: Ribonucleoside-diphosphate reductase large subunit-like protein (806 aa).

The protein belongs to the ribonucleoside diphosphate reductase large chain family.

Its subcellular location is the virion. It localises to the host cytoplasm. Its function is as follows. Does not possess a ribonucleotide reductase activity. Betaherpesviruses probably use another strategy to expand the dNTP pool in a quiescent host cell. This Human herpesvirus 7 (strain JI) (HHV-7) protein is Ribonucleoside-diphosphate reductase large subunit-like protein.